A 246-amino-acid chain; its full sequence is MTAVESGSKVLRMKESDAQKLLAMRCHIGTRNQSSAMKKYIYGRTAEGSHIIDLHMMWEKLILAARVIAAVENPKDVCVCSSRLYGTRAIYKFSQHVGTSFHGGRFIPGTFTNQIQKKFVQPRVLVVTDPRTDHQAIREASLVNIPVIALCDTDAPLEYVDIAIPCNNRGIKSIGMMYWLLAREVLRLRGTIVRSVPWEEKVDLFFYRDPNEAAEEKAAAAAAAPAAEAEEGFGWVERNDDNAWEA.

The protein belongs to the universal ribosomal protein uS2 family. Component of the small ribosomal subunit. Mature ribosomes consist of a small (40S) and a large (60S) subunit. The 40S subunit contains about 33 different proteins and 1 molecule of RNA (18S). The 60S subunit contains about 49 different proteins and 3 molecules of RNA (25S, 5.8S and 5S). Interacts with ribosomal protein S21.

It localises to the cytoplasm. Its function is as follows. Required for the assembly and/or stability of the 40S ribosomal subunit. Required for the processing of the 20S rRNA-precursor to mature 18S rRNA in a late step of the maturation of 40S ribosomal subunits. The polypeptide is Small ribosomal subunit protein uS2 (Leishmania infantum).